We begin with the raw amino-acid sequence, 94 residues long: Neurotoxin 213 (94 aa).

An N-terminal signal peptide occupies residues M1–C22. Positions K24 to K88 constitute an LCN-type CS-alpha/beta domain. 3 disulfides stabilise this stretch: C39/C62, C48/C67, and C52/C69.

This sequence belongs to the long (3 C-C) scorpion toxin superfamily. In terms of tissue distribution, expressed by the venom gland.

It is found in the secreted. This Lychas mucronatus (Chinese swimming scorpion) protein is Neurotoxin 213.